An 85-amino-acid polypeptide reads, in one-letter code: Large ribosomal subunit protein bL27 (85 aa).

Residues 1 to 20 (MAHKKAGGSTRNGRDSEAKR) form a disordered region.

It belongs to the bacterial ribosomal protein bL27 family.

In Enterobacter sp. (strain 638), this protein is Large ribosomal subunit protein bL27.